An 887-amino-acid chain; its full sequence is Pyruvate dehydrogenase E1 component (887 aa).

As to quaternary structure, homodimer. Part of the PDH complex, consisting of multiple copies of pyruvate dehydrogenase (E1), dihydrolipoamide acetyltransferase (E2) and lipoamide dehydrogenase (E3). It depends on thiamine diphosphate as a cofactor.

It carries out the reaction N(6)-[(R)-lipoyl]-L-lysyl-[protein] + pyruvate + H(+) = N(6)-[(R)-S(8)-acetyldihydrolipoyl]-L-lysyl-[protein] + CO2. In terms of biological role, component of the pyruvate dehydrogenase (PDH) complex, that catalyzes the overall conversion of pyruvate to acetyl-CoA and CO(2). This Buchnera aphidicola subsp. Acyrthosiphon pisum (strain APS) (Acyrthosiphon pisum symbiotic bacterium) protein is Pyruvate dehydrogenase E1 component (aceE).